We begin with the raw amino-acid sequence, 210 residues long: Probable nicotinate-nucleotide adenylyltransferase (210 aa).

The protein belongs to the NadD family.

It carries out the reaction nicotinate beta-D-ribonucleotide + ATP + H(+) = deamido-NAD(+) + diphosphate. It functions in the pathway cofactor biosynthesis; NAD(+) biosynthesis; deamido-NAD(+) from nicotinate D-ribonucleotide: step 1/1. Its function is as follows. Catalyzes the reversible adenylation of nicotinate mononucleotide (NaMN) to nicotinic acid adenine dinucleotide (NaAD). The polypeptide is Probable nicotinate-nucleotide adenylyltransferase (Streptococcus pyogenes serotype M1).